The following is a 141-amino-acid chain: Small ribosomal subunit protein bS6 (141 aa).

The interval 97-141 (TGQSEMLKAEENRSERRERRDRPEHSDSADGDDGDNSDVSDNADE) is disordered. Positions 103–124 (LKAEENRSERRERRDRPEHSDS) are enriched in basic and acidic residues. A compositionally biased stretch (acidic residues) spans 125 to 141 (ADGDDGDNSDVSDNADE).

The protein belongs to the bacterial ribosomal protein bS6 family.

Binds together with bS18 to 16S ribosomal RNA. The polypeptide is Small ribosomal subunit protein bS6 (Pseudomonas syringae pv. syringae (strain B728a)).